Consider the following 587-residue polypeptide: Dynein axonemal intermediate chain 2 (587 aa).

4 WD repeats span residues 214–254, 261–302, 362–401, and 405–445; these read RPAS…NPVE, SHRD…EPTE, GHHG…SSIM, and YHTS…NNPS. Disordered stretches follow at residues 519-542 and 562-587; these read LKER…DMKE and KEQQ…IVHE.

Belongs to the dynein intermediate chain family. In terms of assembly, consists of at least two heavy chains and a number of intermediate and light chains. Interacts with DNAAF2. Interacts with DNAAF6/PIH1D3. Interacts with HEATR2; probably involved in outer arm dynein assembly. Interacts with C16ORF71/DAAP1.

The protein resides in the cytoplasm. Its subcellular location is the cytoskeleton. The protein localises to the cilium axoneme. It localises to the dynein axonemal particle. Functionally, part of the dynein complex of multiciliated cell cilia. The protein is Dynein axonemal intermediate chain 2 (dnai2) of Xenopus laevis (African clawed frog).